The primary structure comprises 382 residues: Lipid-A-disaccharide synthase (382 aa).

It belongs to the LpxB family.

The catalysed reaction is 2-N,3-O-bis[(3R)-3-hydroxytetradecanoyl]-alpha-D-glucosaminyl 1-phosphate + UDP-2-N,3-O-bis[(3R)-3-hydroxytetradecanoyl]-alpha-D-glucosamine = lipid A disaccharide (E. coli) + UDP + H(+). The enzyme catalyses a lipid X + a UDP-2-N,3-O-bis[(3R)-3-hydroxyacyl]-alpha-D-glucosamine = a lipid A disaccharide + UDP + H(+). It functions in the pathway glycolipid biosynthesis; lipid IV(A) biosynthesis; lipid IV(A) from (3R)-3-hydroxytetradecanoyl-[acyl-carrier-protein] and UDP-N-acetyl-alpha-D-glucosamine: step 5/6. Functionally, condensation of UDP-2,3-diacylglucosamine and 2,3-diacylglucosamine-1-phosphate to form lipid A disaccharide, a precursor of lipid A, a phosphorylated glycolipid that anchors the lipopolysaccharide to the outer membrane of the cell. The sequence is that of Lipid-A-disaccharide synthase from Shigella boydii serotype 18 (strain CDC 3083-94 / BS512).